Consider the following 176-residue polypeptide: 3-hydroxyanthranilate 3,4-dioxygenase (176 aa).

Arginine 44 provides a ligand contact to O2. Positions 48, 54, and 92 each coordinate Fe cation. Substrate is bound at residue glutamate 54. Residues arginine 96 and glutamate 106 each coordinate substrate. Residues cysteine 121, cysteine 124, cysteine 158, and cysteine 161 each contribute to the Fe cation site.

Belongs to the 3-HAO family. In terms of assembly, homodimer. The cofactor is Fe(2+).

The enzyme catalyses 3-hydroxyanthranilate + O2 = (2Z,4Z)-2-amino-3-carboxymuconate 6-semialdehyde. Its pathway is cofactor biosynthesis; NAD(+) biosynthesis; quinolinate from L-kynurenine: step 3/3. In terms of biological role, catalyzes the oxidative ring opening of 3-hydroxyanthranilate to 2-amino-3-carboxymuconate semialdehyde, which spontaneously cyclizes to quinolinate. This chain is 3-hydroxyanthranilate 3,4-dioxygenase, found in Xanthomonas campestris pv. campestris (strain B100).